Consider the following 407-residue polypeptide: Polygalacturonase (407 aa).

Residues 1 to 26 form the signal peptide; it reads MAPHLNIVPSMFVLLLLFISASKVQS. PbH1 repeat units follow at residues 180-206 and 207-228; these read CKNI…HMGK and SEGV…SIGD. Residue Asn-182 is glycosylated (N-linked (GlcNAc...) asparagine). The active-site Proton donor is Asp-221. The cysteines at positions 223 and 240 are disulfide-linked. The active site involves His-244. PbH1 repeat units lie at residues 260-281 and 290-311; these read VEGI…RIKT and VSEI…LIDQ. Asn-267, Asn-272, Asn-302, and Asn-331 each carry an N-linked (GlcNAc...) asparagine glycan. 2 disulfides stabilise this stretch: Cys-351/Cys-357 and Cys-379/Cys-395. The stretch at 357-384 is one PbH1 5 repeat; that stretch reads CQNVELADIDIKHNGAEPATSQCLNVKP.

The protein belongs to the glycosyl hydrolase 28 family. In terms of tissue distribution, pollen.

It is found in the secreted. It localises to the cell wall. It carries out the reaction (1,4-alpha-D-galacturonosyl)n+m + H2O = (1,4-alpha-D-galacturonosyl)n + (1,4-alpha-D-galacturonosyl)m.. Its function is as follows. May function in the depolymerization of the pectin in its walls during pollen tube elongation, or in that of the pistil during pollination. This chain is Polygalacturonase (G9), found in Gossypium hirsutum (Upland cotton).